Reading from the N-terminus, the 165-residue chain is MKLKGRVLKYGDNVDTDVIIPARYLNTSNPDELARHCMEDIDPDFASKVKDGDIIVAGKNFGSGSSREHAPLAIKSAGVSCVIAESFARIFYRNAINIGLPILECKDVTDRIEEGDLVEVDLNEGKIKLPEKNINIDSTPFPSFMQEIIKAGGLIEKIKGGIKHA.

It belongs to the LeuD family. LeuD type 2 subfamily. As to quaternary structure, heterodimer of LeuC and LeuD.

The enzyme catalyses (2R,3S)-3-isopropylmalate = (2S)-2-isopropylmalate. It functions in the pathway amino-acid biosynthesis; L-leucine biosynthesis; L-leucine from 3-methyl-2-oxobutanoate: step 2/4. Catalyzes the isomerization between 2-isopropylmalate and 3-isopropylmalate, via the formation of 2-isopropylmaleate. The polypeptide is 3-isopropylmalate dehydratase small subunit (Halothermothrix orenii (strain H 168 / OCM 544 / DSM 9562)).